The sequence spans 999 residues: MQTERSLQSFSNRYTQIPFVYDVKRSVYNEENFQQEHRKKGPTSGNVDIDITTFKHHVQCGCSWHKFLRCMLTVFPFLEWICLYRFKDWLLGDLLAGLSVGLVQVPQGLILSLLTRQLIPPLNVTYAAFCSSVIYVIFGSCHQMSIGPFFLVSALMINVLKDRPFNNGHLILGTFVKDDFSVPTFYLSYNRSLSMVASTTFLTGIIQLSMGMLGMGFMATYLPEAATSAYLAAVALHIILAQMTCILGIMVSFHAGPISFIYNIINYCIALPKANSTSILLFITSVVALRINKCIRITFNRYPIEFPMELLLILGFSLLTSKITMATENSKMLMNMIPYSFVFPENPEFGILSRVVLQALSLSFVSSFLLISLGKKIANFHNYRTNSNQDLIAIGLCNLLSSFFKCCVFTGSLSRTTIQDKSGGRQQFASLVGAGVMLLLMVKMESFFHNLPNAVLAGIILSNVVPYLEAIYNLPSLWRQDQYECIIWMVTFSSAILLGLDVGLLISLAFTFFVITIRSHRTKILVLGQIPNTNIYRNVNDYREVILIPGVKIFQCCSSITFVNVYHLKQKVLKEVNMVKLPLKEEEIYTLFHESETSIAENKLCRCFCDCEELEPEIRVVYTERYENRQEQDSSINLIRCSYLGSGDSSQVTSEEQIPYTVSSTSQRNIVQSYEDTEKAWLPNSPPRNSPLPPPEASESLAQSRSRSIIMPYSDTSVQNNTHTIILDFSMVHYVDNRALVILRQMCNAFYNANILVLISGCHTSVVKSFEKNDFFDEGITKAQLFLSLHDAVLFALSRKFSEPSDLSMDETETVIQETYSESDKNGNLSNLRLKTGKAIIEGSQHASPGFTKNLKPGKDDLEFDLELDPMLSFEQSSGMDLNLDLDLDLDQSELDPGSELDSEIQAKPELELESELETDAQTEPETEEEPELEPEPEPEPETEPEPEPERERKTRTRSQSPWRNYFTAYRFGSSNSQSRAPPQTRPEKRKPHNYPNSP.

Residues 1–93 (MQTERSLQSF…YRFKDWLLGD (93 aa)) are Cytoplasmic-facing. A helical transmembrane segment spans residues 94–114 (LLAGLSVGLVQVPQGLILSLL). Residues 115–117 (TRQ) lie on the Extracellular side of the membrane. Residues 118–138 (LIPPLNVTYAAFCSSVIYVIF) traverse the membrane as a helical segment. Position 139 (Gly-139) is a topological domain, cytoplasmic. Residues 140-160 (SCHQMSIGPFFLVSALMINVL) traverse the membrane as a helical segment. The Extracellular portion of the chain corresponds to 161 to 200 (KDRPFNNGHLILGTFVKDDFSVPTFYLSYNRSLSMVASTT). N-linked (GlcNAc...) asparagine glycosylation is present at Asn-190. Residues 201–221 (FLTGIIQLSMGMLGMGFMATY) traverse the membrane as a helical segment. The Cytoplasmic segment spans residues 222–230 (LPEAATSAY). A helical membrane pass occupies residues 231 to 251 (LAAVALHIILAQMTCILGIMV). Topologically, residues 252 to 268 (SFHAGPISFIYNIINYC) are extracellular. A helical membrane pass occupies residues 269–289 (IALPKANSTSILLFITSVVAL). At 290-305 (RINKCIRITFNRYPIE) the chain is on the cytoplasmic side. A helical transmembrane segment spans residues 306–326 (FPMELLLILGFSLLTSKITMA). Residues 327–354 (TENSKMLMNMIPYSFVFPENPEFGILSR) lie on the Extracellular side of the membrane. A helical membrane pass occupies residues 355-375 (VVLQALSLSFVSSFLLISLGK). The Cytoplasmic portion of the chain corresponds to 376–390 (KIANFHNYRTNSNQD). A helical transmembrane segment spans residues 391–411 (LIAIGLCNLLSSFFKCCVFTG). At 412 to 427 (SLSRTTIQDKSGGRQQ) the chain is on the extracellular side. Residues 428–448 (FASLVGAGVMLLLMVKMESFF) form a helical membrane-spanning segment. The Cytoplasmic portion of the chain corresponds to 449 to 453 (HNLPN). Residues 454 to 474 (AVLAGIILSNVVPYLEAIYNL) traverse the membrane as a helical segment. At 475–494 (PSLWRQDQYECIIWMVTFSS) the chain is on the extracellular side. The chain crosses the membrane as a helical span at residues 495–515 (AILLGLDVGLLISLAFTFFVI). Residues 516-544 (TIRSHRTKILVLGQIPNTNIYRNVNDYRE) lie on the Cytoplasmic side of the membrane. Positions 541–796 (DYREVILIPG…LSLHDAVLFA (256 aa)) constitute an STAS domain. Residues 545–565 (VILIPGVKIFQCCSSITFVNV) traverse the membrane as a helical segment. Over 566-999 (YHLKQKVLKE…RKPHNYPNSP (434 aa)) the chain is Extracellular. Residues 661–999 (TVSSTSQRNI…RKPHNYPNSP (339 aa)) form an interaction with RACGAP1 region. Disordered regions lie at residues 678 to 701 (EKAW…SESL) and 893 to 999 (SELD…PNSP). The segment covering 684-696 (NSPPRNSPLPPPE) has biased composition (pro residues). Acidic residues-rich tracts occupy residues 893-903 (SELDPGSELDS) and 912-947 (ELES…EPEP). Residues 973–982 (GSSNSQSRAP) show a composition bias toward polar residues.

This sequence belongs to the SLC26A/SulP transporter (TC 2.A.53) family. Interacts with RACGAP1. Interacts with CFTR; stimulates anion transport activity of CFTR. Post-translationally, N-glycosylated. As to expression, expressed in testis and epididymis. Located at the end of the midpiece of the flagella, known as the annulus, in spermatozoa.

It is found in the membrane. It carries out the reaction sulfate(out) + chloride(in) = sulfate(in) + chloride(out). It catalyses the reaction oxalate(in) + chloride(out) = oxalate(out) + chloride(in). Its function is as follows. Antiporter that mediates the exchange of sulfate and oxalate against chloride ions across a membrane. Stimulates anion transport activity of CFTR. May cooperate with CFTR in the regulation of chloride and bicarbonate ions fluxes required for activation of the ADCY10/PKA pathway during sperm motility and sperm capacitation. May play a role in sperm tail differentiation and motility and hence male fertility. The sequence is that of Testis anion transporter 1 from Mus musculus (Mouse).